Here is a 260-residue protein sequence, read N- to C-terminus: Lysine/arginine/ornithine-binding periplasmic protein (260 aa).

Positions 1-22 (MKKSILALSLLVGLSTAASSYA) are cleaved as a signal peptide. Asp33 is a binding site for L-arginine. Asp33 is an L-lysine binding site. Asp33 is an L-ornithine binding site. A disulfide bridge connects residues Cys60 and Cys67. 6 residues coordinate L-arginine: Ser91, Ser92, Ser94, Arg99, Thr143, and Asp183. L-ornithine contacts are provided by Ser91, Ser92, Ser94, Arg99, Thr143, and Asp183. L-lysine-binding residues include Ser92, Ser94, Arg99, and Thr143.

The protein belongs to the bacterial solute-binding protein 3 family. As to quaternary structure, the complex is composed of two ATP-binding proteins (HisP), two transmembrane proteins (HisM and HisQ) and a solute-binding protein (ArgT).

The protein resides in the periplasm. Its function is as follows. Part of the ABC transporter complex HisPMQ-ArgT involved in lysine/arginine/ornithine transport. Binds lysine, arginine and ornithine. Stimulates ATPase activity of HisP. The polypeptide is Lysine/arginine/ornithine-binding periplasmic protein (argT) (Escherichia coli (strain K12)).